We begin with the raw amino-acid sequence, 248 residues long: 2,3-bisphosphoglycerate-dependent phosphoglycerate mutase (248 aa).

Substrate-binding positions include 8–15, 21–22, Arg60, 87–90, Lys98, 114–115, and 183–184; these read RHGESTWN, TG, ERHY, RR, and GN. The Tele-phosphohistidine intermediate role is filled by His9. The Proton donor/acceptor role is filled by Glu87.

The protein belongs to the phosphoglycerate mutase family. BPG-dependent PGAM subfamily. As to quaternary structure, homodimer.

The catalysed reaction is (2R)-2-phosphoglycerate = (2R)-3-phosphoglycerate. The protein operates within carbohydrate degradation; glycolysis; pyruvate from D-glyceraldehyde 3-phosphate: step 3/5. In terms of biological role, catalyzes the interconversion of 2-phosphoglycerate and 3-phosphoglycerate. The protein is 2,3-bisphosphoglycerate-dependent phosphoglycerate mutase of Ralstonia nicotianae (strain ATCC BAA-1114 / GMI1000) (Ralstonia solanacearum).